The following is a 335-amino-acid chain: Olfactory receptor 10R2 (335 aa).

The Extracellular segment spans residues 1–45; it reads MPQILIFTYLNMFYFFPPLQILAENLTMVTEFLLLGFSSLGEIQL. Residue asparagine 25 is glycosylated (N-linked (GlcNAc...) asparagine). Residues 46-66 traverse the membrane as a helical segment; it reads ALFVVFLFLYLVILSGNVTII. At 67 to 74 the chain is on the cytoplasmic side; sequence SVIHLDKS. Residues 75-95 traverse the membrane as a helical segment; it reads LHTPMYFFLGILSTSETFYTF. At 96–119 the chain is on the extracellular side; the sequence is VILPKMLINLLSVARTISFNCCAL. A disulfide bond links cysteine 117 and cysteine 209. The helical transmembrane segment at 120–140 threads the bilayer; the sequence is QMFFFLGFAITNCLLLGVMGY. The Cytoplasmic portion of the chain corresponds to 141-159; that stretch reads DRYAAICHPLHYPTLMSWQ. The helical transmembrane segment at 160 to 180 threads the bilayer; sequence VCGKLAAACAIGGFLASLTVV. The Extracellular segment spans residues 181-217; that stretch reads NLVFSLPFCSANKVNHYFCDISAVILLACTNTDVNEF. A helical membrane pass occupies residues 218-237; sequence VIFICGVLVLVVPFLFICVS. The Cytoplasmic segment spans residues 238–257; it reads YLCILRTILKIPSAEGRRKA. A helical transmembrane segment spans residues 258-278; the sequence is FSTCASHLSVVIVHYGCASFI. Over 279 to 291 the chain is Extracellular; that stretch reads YLRPTANYVSNKD. A helical transmembrane segment spans residues 292-312; the sequence is RLVTVTYTIVTPLLNPMVYSL. Residues 313–335 lie on the Cytoplasmic side of the membrane; that stretch reads RNKDVQLAIRKVLGKKGSLKLYN.

This sequence belongs to the G-protein coupled receptor 1 family.

It localises to the cell membrane. Its function is as follows. Odorant receptor. The polypeptide is Olfactory receptor 10R2 (OR10R2) (Homo sapiens (Human)).